The primary structure comprises 165 residues: Protein-export protein SecB (165 aa).

It belongs to the SecB family. Homotetramer, a dimer of dimers. One homotetramer interacts with 1 SecA dimer.

Its subcellular location is the cytoplasm. In terms of biological role, one of the proteins required for the normal export of preproteins out of the cell cytoplasm. It is a molecular chaperone that binds to a subset of precursor proteins, maintaining them in a translocation-competent state. It also specifically binds to its receptor SecA. The protein is Protein-export protein SecB of Marinobacter nauticus (strain ATCC 700491 / DSM 11845 / VT8) (Marinobacter aquaeolei).